Here is a 263-residue protein sequence, read N- to C-terminus: UDP-N-acetylenolpyruvoylglucosamine reductase (263 aa).

Residue arginine 146 is part of the active site. Catalysis depends on serine 188, which acts as the Proton donor. The active site involves glutamate 258.

This sequence belongs to the MurB family. FAD serves as cofactor.

It localises to the cytoplasm. It carries out the reaction UDP-N-acetyl-alpha-D-muramate + NADP(+) = UDP-N-acetyl-3-O-(1-carboxyvinyl)-alpha-D-glucosamine + NADPH + H(+). It functions in the pathway cell wall biogenesis; peptidoglycan biosynthesis. In terms of biological role, cell wall formation. The sequence is that of UDP-N-acetylenolpyruvoylglucosamine reductase from Helicobacter hepaticus (strain ATCC 51449 / 3B1).